Here is a 154-residue protein sequence, read N- to C-terminus: 6,7-dimethyl-8-ribityllumazine synthase (154 aa).

5-amino-6-(D-ribitylamino)uracil-binding positions include Phe21, 55–57 (AFE), and 79–81 (CVI). 84-85 (AT) contributes to the (2S)-2-hydroxy-3-oxobutyl phosphate binding site. The active-site Proton donor is His87. Phe111 lines the 5-amino-6-(D-ribitylamino)uracil pocket. Arg125 contacts (2S)-2-hydroxy-3-oxobutyl phosphate.

It belongs to the DMRL synthase family. As to quaternary structure, forms an icosahedral capsid composed of 60 subunits, arranged as a dodecamer of pentamers.

The enzyme catalyses (2S)-2-hydroxy-3-oxobutyl phosphate + 5-amino-6-(D-ribitylamino)uracil = 6,7-dimethyl-8-(1-D-ribityl)lumazine + phosphate + 2 H2O + H(+). Its pathway is cofactor biosynthesis; riboflavin biosynthesis; riboflavin from 2-hydroxy-3-oxobutyl phosphate and 5-amino-6-(D-ribitylamino)uracil: step 1/2. Catalyzes the formation of 6,7-dimethyl-8-ribityllumazine by condensation of 5-amino-6-(D-ribitylamino)uracil with 3,4-dihydroxy-2-butanone 4-phosphate. This is the penultimate step in the biosynthesis of riboflavin. This Macrococcus caseolyticus (strain JCSC5402) (Macrococcoides caseolyticum) protein is 6,7-dimethyl-8-ribityllumazine synthase.